Consider the following 96-residue polypeptide: UPF0235 protein VCM66_0443 (96 aa).

This sequence belongs to the UPF0235 family.

The polypeptide is UPF0235 protein VCM66_0443 (Vibrio cholerae serotype O1 (strain M66-2)).